The primary structure comprises 313 residues: Tyrosine recombinase XerC (313 aa).

Residues 11 to 97 (NSLQKPLERF…SLRSFFDFLI (87 aa)) form the Core-binding (CB) domain. Positions 118–298 (PLPKNLDVDE…DFQHLAQAYD (181 aa)) constitute a Tyr recombinase domain. Residues Arg157, Lys181, His250, Arg253, and His276 contribute to the active site. Catalysis depends on Tyr285, which acts as the O-(3'-phospho-DNA)-tyrosine intermediate.

It belongs to the 'phage' integrase family. XerC subfamily. In terms of assembly, forms a cyclic heterotetrameric complex composed of two molecules of XerC and two molecules of XerD.

The protein localises to the cytoplasm. Site-specific tyrosine recombinase, which acts by catalyzing the cutting and rejoining of the recombining DNA molecules. The XerC-XerD complex is essential to convert dimers of the bacterial chromosome into monomers to permit their segregation at cell division. It also contributes to the segregational stability of plasmids. This is Tyrosine recombinase XerC from Vibrio campbellii (strain ATCC BAA-1116).